An 843-amino-acid polypeptide reads, in one-letter code: Protein P (843 aa).

The tract at residues 1–177 (MPLSYQHFRK…FCGSPYSWEQ (177 aa)) is terminal protein domain (TP). The spacer stretch occupies residues 178–346 (ELQHGRLVFQ…YCLTHIVNLL (169 aa)). The tract at residues 347-690 (EDWGPCTEHG…YLHLYPVARQ (344 aa)) is polymerase/reverse transcriptase domain (RT). The region spanning 357–600 (EHNIRIPRTP…YSLNFMGYVI (244 aa)) is the Reverse transcriptase domain. Mg(2+)-binding residues include aspartate 429, aspartate 551, and aspartate 552.

Belongs to the hepadnaviridae P protein family.

It catalyses the reaction DNA(n) + a 2'-deoxyribonucleoside 5'-triphosphate = DNA(n+1) + diphosphate. The enzyme catalyses Endonucleolytic cleavage to 5'-phosphomonoester.. Activated by host HSP70 and HSP40 in vitro to be able to bind the epsilon loop of the pgRNA. Because deletion of the RNase H region renders the protein partly chaperone-independent, the chaperones may be needed indirectly to relieve occlusion of the RNA-binding site by this domain. Inhibited by several reverse-transcriptase inhibitors: Lamivudine, Adefovir and Entecavir. Multifunctional enzyme that converts the viral RNA genome into dsDNA in viral cytoplasmic capsids. This enzyme displays a DNA polymerase activity that can copy either DNA or RNA templates, and a ribonuclease H (RNase H) activity that cleaves the RNA strand of RNA-DNA heteroduplexes in a partially processive 3'- to 5'-endonucleasic mode. Neo-synthesized pregenomic RNA (pgRNA) are encapsidated together with the P protein, and reverse-transcribed inside the nucleocapsid. Initiation of reverse-transcription occurs first by binding the epsilon loop on the pgRNA genome, and is initiated by protein priming, thereby the 5'-end of (-)DNA is covalently linked to P protein. Partial (+)DNA is synthesized from the (-)DNA template and generates the relaxed circular DNA (RC-DNA) genome. After budding and infection, the RC-DNA migrates in the nucleus, and is converted into a plasmid-like covalently closed circular DNA (cccDNA). The activity of P protein does not seem to be necessary for cccDNA generation, and is presumably released from (+)DNA by host nuclear DNA repair machinery. In Hepatitis B virus genotype C subtype adr (isolate Japan/Nishioka/1983) (HBV-C), this protein is Protein P.